A 197-amino-acid chain; its full sequence is Phosphoheptose isomerase (197 aa).

The SIS domain occupies 37 to 197; that stretch reads MLQCLMNDGK…CIDSVLLEGM (161 aa). Position 52–54 (52–54) interacts with substrate; it reads NGG. Histidine 61 and glutamate 65 together coordinate Zn(2+). Substrate-binding positions include glutamate 65, 94–95, 120–122, serine 125, and glutamine 175; these read ND and STS. Zn(2+) is bound by residues glutamine 175 and histidine 183.

The protein belongs to the SIS family. GmhA subfamily. As to quaternary structure, homotetramer. It depends on Zn(2+) as a cofactor.

It localises to the cytoplasm. It carries out the reaction 2 D-sedoheptulose 7-phosphate = D-glycero-alpha-D-manno-heptose 7-phosphate + D-glycero-beta-D-manno-heptose 7-phosphate. Its pathway is carbohydrate biosynthesis; D-glycero-D-manno-heptose 7-phosphate biosynthesis; D-glycero-alpha-D-manno-heptose 7-phosphate and D-glycero-beta-D-manno-heptose 7-phosphate from sedoheptulose 7-phosphate: step 1/1. It functions in the pathway bacterial outer membrane biogenesis; LOS core biosynthesis. Catalyzes the isomerization of sedoheptulose 7-phosphate in D-glycero-D-manno-heptose 7-phosphate. The sequence is that of Phosphoheptose isomerase from Neisseria meningitidis serogroup A / serotype 4A (strain DSM 15465 / Z2491).